The following is a 283-amino-acid chain: 1D-myo-inositol 2-acetamido-2-deoxy-alpha-D-glucopyranoside deacetylase (283 aa).

Zn(2+) contacts are provided by His-15, Asp-18, and His-150.

It belongs to the MshB deacetylase family. The cofactor is Zn(2+).

It carries out the reaction 1D-myo-inositol 2-acetamido-2-deoxy-alpha-D-glucopyranoside + H2O = 1D-myo-inositol 2-amino-2-deoxy-alpha-D-glucopyranoside + acetate. In terms of biological role, catalyzes the deacetylation of 1D-myo-inositol 2-acetamido-2-deoxy-alpha-D-glucopyranoside (GlcNAc-Ins) in the mycothiol biosynthesis pathway. The polypeptide is 1D-myo-inositol 2-acetamido-2-deoxy-alpha-D-glucopyranoside deacetylase (Actinosynnema mirum (strain ATCC 29888 / DSM 43827 / JCM 3225 / NBRC 14064 / NCIMB 13271 / NRRL B-12336 / IMRU 3971 / 101)).